A 378-amino-acid chain; its full sequence is Serpin B6 (378 aa).

Methionine 1 is modified (N-acetylmethionine). Lysine 196 is subject to N6-acetyllysine.

Belongs to the serpin family. Ov-serpin subfamily. As to quaternary structure, forms a complex with the monomeric form of beta-tryptase. Brain.

The protein localises to the cytoplasm. Its function is as follows. Inhibitor of cathepsin G, kallikrein-8 and thrombin. May play an important role in the inner ear in the protection against leakage of lysosomal content during stress. May be involved in the regulation of serine proteinases present in the brain or extravasated from the blood. In Bos taurus (Bovine), this protein is Serpin B6 (SERPINB6).